Here is a 69-residue protein sequence, read N- to C-terminus: MTMMKAIWPEPSDPESMMEAAIDLFGDEAATAVAHCGLEAWTDGRADDFAFWVDIFRSLTGMPSAGAGN.

This is an uncharacterized protein from Sinorhizobium fredii (strain NBRC 101917 / NGR234).